A 653-amino-acid chain; its full sequence is MPPPFPTATAAASTTSHLALLLLLSSSSVFFLYKSLRLRRNNPPSPPPGQGPAPTPTLLYASATGTSKALAAGLSRRLAEAGVTAHPADAAAFDPDDLPSLPLLLLVLPTHDGGAPPPAAAFLARWLEESAADFRAGAALLSGLRFAVFGVGSRAYGETFNAAARSFSRWLRALGAAEVVAVGEGDVDGGDLEVVFEEWCGRVVRVVKGEEIGEGHNGESDGFDELEEEESDDDDDEEEVDGGEVDMEDIAGKAPAARRRNGKVEGALSNGGENGVRDMVTPIIRTSLEKQGYKIIGSHSGVKICRWTKSQLRGRGGCYKHSFYGIESHRCMEATPSLACANKCVFCWRHHTNPVGKSWKWKMDDPLDIVNAAIDQHTKMVKQMKGVPGVKPERLAEGLSPRHCALSLVGEPIMYPEINVLIDELHRRHISTFLVTNAQFPDKIKTLKPITQLYVSVDAATKESLKAVDRPLFSDFWERFLDSLKSLHDKDQRTVYRLTLVKGWNAEEIDGYAKLLSLGQPDFIEIKGVTYCGSSATSKLTMENVPWHSDVKDFSEALALKSGGVYEVACEHAHSCCVLLAKVDKFKINGKWHTWIDYDRFHELVTSGKPFRSQDYMALTPSWAVYGAEEGGFDPDQSRYKKERRHGAAALKD.

The Flavodoxin-like domain maps to 56–204; the sequence is PTLLYASATG…VFEEWCGRVV (149 aa). FMN is bound by residues 62-66 and 148-180; these read SATGT and VFGV…AEVV. Residues 211-276 are disordered; the sequence is EIGEGHNGES…ALSNGGENGV (66 aa). Positions 221–249 are enriched in acidic residues; the sequence is DGFDELEEEESDDDDDEEEVDGGEVDMED. The Radical SAM core domain occupies 324–567; sequence YGIESHRCME…LALKSGGVYE (244 aa). 3 residues coordinate [4Fe-4S] cluster: Cys-340, Cys-344, and Cys-347. A disordered region spans residues 630–653; it reads EGGFDPDQSRYKKERRHGAAALKD.

The protein belongs to the TYW1 family. Requires [4Fe-4S] cluster as cofactor.

It catalyses the reaction N(1)-methylguanosine(37) in tRNA(Phe) + pyruvate + S-adenosyl-L-methionine = 4-demethylwyosine(37) in tRNA(Phe) + 5'-deoxyadenosine + L-methionine + CO2 + H2O. Its pathway is tRNA modification; wybutosine-tRNA(Phe) biosynthesis. Functionally, probable component of the wybutosine biosynthesis pathway. Wybutosine is a hyper modified guanosine with a tricyclic base found at the 3'-position adjacent to the anticodon of eukaryotic phenylalanine tRNA. Catalyzes the condensation of N-methylguanine with 2 carbon atoms from pyruvate to form the tricyclic 4-demethylwyosine, an intermediate in wybutosine biosynthesis. This chain is S-adenosyl-L-methionine-dependent tRNA 4-demethylwyosine synthase (TYW1), found in Oryza sativa subsp. japonica (Rice).